The sequence spans 111 residues: Aspartate 1-decarboxylase (111 aa).

Serine 25 (schiff-base intermediate with substrate; via pyruvic acid) is an active-site residue. Serine 25 carries the pyruvic acid (Ser) modification. Residue threonine 57 coordinates substrate. Tyrosine 58 acts as the Proton donor in catalysis. 73-75 is a substrate binding site; sequence GPA.

This sequence belongs to the PanD family. In terms of assembly, heterooctamer of four alpha and four beta subunits. It depends on pyruvate as a cofactor. In terms of processing, is synthesized initially as an inactive proenzyme, which is activated by self-cleavage at a specific serine bond to produce a beta-subunit with a hydroxyl group at its C-terminus and an alpha-subunit with a pyruvoyl group at its N-terminus.

Its subcellular location is the cytoplasm. The enzyme catalyses L-aspartate + H(+) = beta-alanine + CO2. The protein operates within cofactor biosynthesis; (R)-pantothenate biosynthesis; beta-alanine from L-aspartate: step 1/1. Its function is as follows. Catalyzes the pyruvoyl-dependent decarboxylation of aspartate to produce beta-alanine. This chain is Aspartate 1-decarboxylase, found in Francisella tularensis subsp. tularensis (strain FSC 198).